The primary structure comprises 349 residues: Ferredoxin--NADP reductase 1 (349 aa).

Residues glutamate 36, lysine 44, tyrosine 48, isoleucine 88, leucine 123, aspartate 290, and serine 331 each contribute to the FAD site.

The protein belongs to the ferredoxin--NADP reductase type 2 family. In terms of assembly, homodimer. The cofactor is FAD.

It carries out the reaction 2 reduced [2Fe-2S]-[ferredoxin] + NADP(+) + H(+) = 2 oxidized [2Fe-2S]-[ferredoxin] + NADPH. This chain is Ferredoxin--NADP reductase 1, found in Bacillus mycoides (strain KBAB4) (Bacillus weihenstephanensis).